A 112-amino-acid chain; its full sequence is Omega-agatoxin-1A (112 aa).

The N-terminal stretch at 1–19 (MMKFVVFLACLFVAAHSFA) is a signal peptide. Positions 20-36 (VEGEEEYFEAEVPELER) are excised as a propeptide. A propeptide spans 103 to 109 (RSEESER) (glu-rich).

This sequence belongs to the neurotoxin 04 (omega-agtx) family. 01 (type I omega-agtx) subfamily. In terms of assembly, heterodimer of two subunits, a major chain and a minor chain, linked by a disulfide bond. Proteolytically processed to yield the major and the minor chains. As to expression, expressed by the venom gland.

The protein localises to the secreted. Its function is as follows. Omega-agatoxins are antagonists of voltage-gated calcium channels. They block insect neuromuscular transmission presynaptically. This toxin is a blocker of L-type calcium channels (Cav/CACNA1). The sequence is that of Omega-agatoxin-1A from Agelenopsis aperta (North American funnel-web spider).